The following is a 160-amino-acid chain: Cytochrome b6-f complex subunit 4 (160 aa).

The next 3 helical transmembrane spans lie at 36 to 56 (LLYIFPVVILGTIACVVGLAV), 95 to 115 (LLGIALQTLIPLGLMILPFIE), and 131 to 151 (SVFLFGTFLTIYLGIGACLPI).

It belongs to the cytochrome b family. PetD subfamily. As to quaternary structure, the 4 large subunits of the cytochrome b6-f complex are cytochrome b6, subunit IV (17 kDa polypeptide, PetD), cytochrome f and the Rieske protein, while the 4 small subunits are PetG, PetL, PetM and PetN. The complex functions as a dimer.

Its subcellular location is the cellular thylakoid membrane. Its function is as follows. Component of the cytochrome b6-f complex, which mediates electron transfer between photosystem II (PSII) and photosystem I (PSI), cyclic electron flow around PSI, and state transitions. In Prochlorococcus marinus subsp. pastoris (strain CCMP1986 / NIES-2087 / MED4), this protein is Cytochrome b6-f complex subunit 4.